The sequence spans 142 residues: Protein E6 (142 aa).

2 zinc fingers span residues 31–67 (CIWCKNHLTSAEAYAYHFKDLHVVWKKGFPYAACAFC) and 104–140 (CAICQKPLSPSEKDHHIYNGRHFRFILNRWTGRCTQC).

This sequence belongs to the papillomaviridae E6 protein family. As to quaternary structure, forms homodimers. Interacts with ubiquitin-protein ligase UBE3A/E6-AP; this interaction stimulates UBE3A ubiquitin activity. Interacts with host TP53 and EP300; this interaction inhibits TP53 activity.

Its subcellular location is the host cytoplasm. The protein localises to the host nucleus. Functionally, plays a major role in the induction and maintenance of cellular transformation. E6 associates with host UBE3A/E6-AP ubiquitin-protein ligase and modulates its activity. Sequesters tumor suppressor TP53 in the host cytoplasm and modulates its activity by interacting with host EP300 that results in the reduction of TP53 acetylation and activation. In turn, apoptosis induced by DNA damage is inhibited. E6 also protects host keratinocytes from apoptosis by mediating the degradation of host BAK1. May also inhibit host immune response. The chain is Protein E6 from Homo sapiens (Human).